Reading from the N-terminus, the 578-residue chain is Isocitrate dehydrogenase kinase/phosphatase (578 aa).

Residues Ala-315–Met-321 and Lys-336 contribute to the ATP site. Residue Asp-371 is part of the active site.

The protein belongs to the AceK family.

The protein localises to the cytoplasm. The enzyme catalyses L-seryl-[isocitrate dehydrogenase] + ATP = O-phospho-L-seryl-[isocitrate dehydrogenase] + ADP + H(+). Bifunctional enzyme which can phosphorylate or dephosphorylate isocitrate dehydrogenase (IDH) on a specific serine residue. This is a regulatory mechanism which enables bacteria to bypass the Krebs cycle via the glyoxylate shunt in response to the source of carbon. When bacteria are grown on glucose, IDH is fully active and unphosphorylated, but when grown on acetate or ethanol, the activity of IDH declines drastically concomitant with its phosphorylation. The sequence is that of Isocitrate dehydrogenase kinase/phosphatase from Escherichia coli (strain ATCC 8739 / DSM 1576 / NBRC 3972 / NCIMB 8545 / WDCM 00012 / Crooks).